A 294-amino-acid polypeptide reads, in one-letter code: Nucleotide-binding protein DICTH_1001 (294 aa).

10 to 17 (GLSGAGKS) lines the ATP pocket. 61–64 (DIRT) contributes to the GTP binding site.

The protein belongs to the RapZ-like family.

Its function is as follows. Displays ATPase and GTPase activities. The sequence is that of Nucleotide-binding protein DICTH_1001 from Dictyoglomus thermophilum (strain ATCC 35947 / DSM 3960 / H-6-12).